The following is a 97-amino-acid chain: Putative pterin-4-alpha-carbinolamine dehydratase (97 aa).

It belongs to the pterin-4-alpha-carbinolamine dehydratase family.

It catalyses the reaction (4aS,6R)-4a-hydroxy-L-erythro-5,6,7,8-tetrahydrobiopterin = (6R)-L-erythro-6,7-dihydrobiopterin + H2O. This is Putative pterin-4-alpha-carbinolamine dehydratase from Christiangramia forsetii (strain DSM 17595 / CGMCC 1.15422 / KT0803) (Gramella forsetii).